Here is a 62-residue protein sequence, read N- to C-terminus: Large ribosomal subunit protein uL30 (62 aa).

It belongs to the universal ribosomal protein uL30 family. In terms of assembly, part of the 50S ribosomal subunit.

The sequence is that of Large ribosomal subunit protein uL30 from Ruegeria pomeroyi (strain ATCC 700808 / DSM 15171 / DSS-3) (Silicibacter pomeroyi).